We begin with the raw amino-acid sequence, 153 residues long: Transcription antitermination protein NusB (153 aa).

The protein belongs to the NusB family.

In terms of biological role, involved in transcription antitermination. Required for transcription of ribosomal RNA (rRNA) genes. Binds specifically to the boxA antiterminator sequence of the ribosomal RNA (rrn) operons. This chain is Transcription antitermination protein NusB, found in Fusobacterium nucleatum subsp. nucleatum (strain ATCC 25586 / DSM 15643 / BCRC 10681 / CIP 101130 / JCM 8532 / KCTC 2640 / LMG 13131 / VPI 4355).